A 205-amino-acid polypeptide reads, in one-letter code: Large ribosomal subunit protein uL13 (205 aa).

Belongs to the universal ribosomal protein uL13 family.

The polypeptide is Large ribosomal subunit protein uL13 (RPL13A) (Lupinus luteus (European yellow lupine)).